A 342-amino-acid chain; its full sequence is MDYKEAGVDVEAGRNFVEKIKKKVESTHRPEVLGGLGGFGGFFQIPSGYQEPVLVSGTDGVGTKLKLAQGLNCHHTVGIDLVAMCVNDVLTSGAQPLFFLDYLATGQLNPQQLAEVVEGIVEGCHLSHCALLGGETAEMPGFYGVGEYDLAGFCVGIVEKSLLLDGSQVQIGDAVIGLASSGVHSNGFSLVRKIVETQGLSWDFCPDILEGKSLGEVLLTPTQIYVKPILEALSSNLKIHGMAHITGGGLPENLPRCLQANQSVQINPNSWEILPIFTWLAQAGQVSPSAMFNTFNMGIGFVVIVPVDQAETTLNWFNNKGIKAYQMGEVIEGTGHLVGLDF.

Belongs to the AIR synthase family.

The protein resides in the cytoplasm. The catalysed reaction is 2-formamido-N(1)-(5-O-phospho-beta-D-ribosyl)acetamidine + ATP = 5-amino-1-(5-phospho-beta-D-ribosyl)imidazole + ADP + phosphate + H(+). Its pathway is purine metabolism; IMP biosynthesis via de novo pathway; 5-amino-1-(5-phospho-D-ribosyl)imidazole from N(2)-formyl-N(1)-(5-phospho-D-ribosyl)glycinamide: step 2/2. In Gloeothece citriformis (strain PCC 7424) (Cyanothece sp. (strain PCC 7424)), this protein is Phosphoribosylformylglycinamidine cyclo-ligase.